We begin with the raw amino-acid sequence, 599 residues long: Serine hydroxymethyltransferase 6 (599 aa).

A disordered region spans residues 1–25; that stretch reads MDRIAQSDLSLGFGSSHALPLPHPP. Residue Lys374 is modified to N6-(pyridoxal phosphate)lysine.

This sequence belongs to the SHMT family. In terms of assembly, homotetramer. Pyridoxal 5'-phosphate is required as a cofactor.

It is found in the cytoplasm. The enzyme catalyses (6R)-5,10-methylene-5,6,7,8-tetrahydrofolate + glycine + H2O = (6S)-5,6,7,8-tetrahydrofolate + L-serine. It participates in one-carbon metabolism; tetrahydrofolate interconversion. Functionally, catalyzes the interconversion of serine and glycine. The polypeptide is Serine hydroxymethyltransferase 6 (SHM6) (Arabidopsis thaliana (Mouse-ear cress)).